Here is a 397-residue protein sequence, read N- to C-terminus: ATP-dependent RNA helicase eIF4A (397 aa).

Positions 23–51 (YTFDDLNLKPNIVRGIFGYGYESPSAIQQ) match the Q motif motif. The Helicase ATP-binding domain maps to 54–224 (ILPITEGRDV…TKFMNNPVRI (171 aa)). ATP is bound at residue 67-74 (AQSGTGKT). The DEAD box motif lies at 172–175 (DEAD). A Helicase C-terminal domain is found at 235–396 (GIKQFYINVE…EMPADIGALF (162 aa)).

This sequence belongs to the DEAD box helicase family. eIF4A subfamily. In terms of assembly, component of the eIF4F complex, which composition varies with external and internal environmental conditions. It is composed of at least eIF4A, eIF4E and eIF4G.

It is found in the cytoplasm. It catalyses the reaction ATP + H2O = ADP + phosphate + H(+). Its function is as follows. ATP-dependent RNA helicase which is a subunit of the eIF4F complex involved in cap recognition and is required for mRNA binding to ribosome. In the current model of translation initiation, eIF4A unwinds RNA secondary structures in the 5'-UTR of mRNAs which is necessary to allow efficient binding of the small ribosomal subunit, and subsequent scanning for the initiator codon. The sequence is that of ATP-dependent RNA helicase eIF4A (TIF1) from Debaryomyces hansenii (strain ATCC 36239 / CBS 767 / BCRC 21394 / JCM 1990 / NBRC 0083 / IGC 2968) (Yeast).